The sequence spans 153 residues: Arachidonate 5-lipoxygenase-activating protein (153 aa).

Residues 1–8 (MDQETVGN) lie on the Lumenal side of the membrane. Residues 9 to 30 (VVLLAIVTLISVVQNGFFAHKV) traverse the membrane as a helical segment. The Cytoplasmic portion of the chain corresponds to 31–52 (EHESRTQNGRSFQRTGTLAFER). The chain crosses the membrane as a helical span at residues 53–77 (VYTANQNCVDAYPTFLAVLWSAGLL). The Lumenal segment spans residues 78 to 80 (CSQ). Residues 81-102 (VPAAFAGLMYLLVRQKYFVGYL) traverse the membrane as a helical segment. Residues 103-107 (GERTQ) lie on the Cytoplasmic side of the membrane. Residues 108–115 (STPGYIFG) lie within the membrane without spanning it. A helical transmembrane segment spans residues 116–128 (KRIILFLFLMSVA). The Lumenal portion of the chain corresponds to 129-153 (GIFNYYLIFFFGSDFENYIKTVTTT).

This sequence belongs to the MAPEG family. Homotrimer. Interacts with LTC4S and ALOX5.

It is found in the nucleus membrane. The protein resides in the endoplasmic reticulum membrane. Functionally, required for leukotriene biosynthesis by ALOX5 (5-lipoxygenase). Anchors ALOX5 to the membrane. Binds arachidonic acid, and could play an essential role in the transfer of arachidonic acid to ALOX5. Binds to MK-886, a compound that blocks the biosynthesis of leukotrienes. The protein is Arachidonate 5-lipoxygenase-activating protein (ALOX5AP) of Macaca mulatta (Rhesus macaque).